The primary structure comprises 199 residues: Outer-membrane lipoprotein LolB (199 aa).

The N-terminal stretch at 1-28 (MSVCPAPRSPVRWLHAFTLCLLLAVLAG) is a signal peptide. A lipid anchor (N-palmitoyl cysteine) is attached at Cys-29. Cys-29 is lipidated: S-diacylglycerol cysteine.

The protein belongs to the LolB family. Monomer.

Its subcellular location is the cell outer membrane. Plays a critical role in the incorporation of lipoproteins in the outer membrane after they are released by the LolA protein. In Bordetella parapertussis (strain 12822 / ATCC BAA-587 / NCTC 13253), this protein is Outer-membrane lipoprotein LolB.